The chain runs to 255 residues: Ribosomal RNA small subunit methyltransferase A (255 aa).

S-adenosyl-L-methionine is bound by residues asparagine 12, leucine 14, glycine 39, glutamate 60, aspartate 84, and asparagine 106.

Belongs to the class I-like SAM-binding methyltransferase superfamily. rRNA adenine N(6)-methyltransferase family. RsmA subfamily.

It is found in the cytoplasm. The catalysed reaction is adenosine(1518)/adenosine(1519) in 16S rRNA + 4 S-adenosyl-L-methionine = N(6)-dimethyladenosine(1518)/N(6)-dimethyladenosine(1519) in 16S rRNA + 4 S-adenosyl-L-homocysteine + 4 H(+). Specifically dimethylates two adjacent adenosines (A1518 and A1519) in the loop of a conserved hairpin near the 3'-end of 16S rRNA in the 30S particle. May play a critical role in biogenesis of 30S subunits. The chain is Ribosomal RNA small subunit methyltransferase A from Herminiimonas arsenicoxydans.